The primary structure comprises 2079 residues: von Willebrand factor A domain-containing protein DDB_G0286969 (2079 aa).

One can recognise a VIT domain in the interval 11 to 147; it reads EQILPSFISI…ELEIIITYST (137 aa). A disordered region spans residues 178–203; that stretch reads NENSTTNTNTQTQPQSVNTTTTTTPS. Over residues 180–203 the composition is skewed to low complexity; that stretch reads NSTTNTNTQTQPQSVNTTTTTTPS. Residues 354-525 form the VWFA domain; the sequence is ELIFLVDVSE…KVMRQLKRAL (172 aa). Disordered regions lie at residues 761-800, 832-866, 956-1139, 1155-1203, and 1239-1294; these read PTTL…LKTP, PFVP…TEVK, AKPV…TKPT, NEPA…VSST, and DSNT…ADAE. Composition is skewed to low complexity over residues 785–800, 841–866, and 956–973; these read TTQQ…LKTP, PTTT…TEVK, and AKPV…QQTK. Residues 923 to 957 adopt a coiled-coil conformation; sequence EMIKIAEAKAAAEQKAAAEQKAIADAKAAAEQAAK. Basic and acidic residues predominate over residues 974 to 989; sequence PKADKQSKQNAKDNKQ. Low complexity predominate over residues 992–1006; that stretch reads KPVVVEQKPPVVTET. Polar residues predominate over residues 1007–1021; the sequence is KPTVATESATPTKPT. Residues 1023-1061 show a composition bias toward low complexity; the sequence is AQAAAAAAAAAQQAAQQAAATTPVKQQPTKQTTPNKSTP. A compositionally biased stretch (basic and acidic residues) spans 1092–1111; sequence KPVETKPVEQTKPVETKPVE. Low complexity predominate over residues 1176–1198; that stretch reads NNNNNNNNNNNNNNNNNNNNNNN. Residues 1239-1272 show a composition bias toward polar residues; that stretch reads DSNTKAPDSLKTTPIFSNGPQGISPSSGNGSNKS. The span at 1280-1292 shows a compositional bias: basic and acidic residues; sequence DRGGRGGRDRNAD. The MIF4G domain maps to 1317-1527; it reads LKKFKFNLNR…LDLIDLRANK (211 aa). The interval 1530–1755 is disordered; that stretch reads PKNSTQTKTK…PAPVEPVKPK (226 aa). Composition is skewed to basic and acidic residues over residues 1538 to 1550, 1557 to 1599, and 1621 to 1634; these read TKKD…ERFI, QKRE…RDAP, and NNRD…DRSG. 2 stretches are compositionally biased toward low complexity: residues 1635–1659 and 1688–1699; these read GKQS…LFGS and SSSIPSIPNRSN. Residues 1725–1740 are compositionally biased toward basic and acidic residues; it reads SNDRDSRGPSKPDNRK. Residues 1760–1882 enclose the MI domain; it reads KIEDDISMTL…PLNYLEEAYA (123 aa).

This chain is von Willebrand factor A domain-containing protein DDB_G0286969, found in Dictyostelium discoideum (Social amoeba).